A 272-amino-acid chain; its full sequence is 3-methyl-2-oxobutanoate hydroxymethyltransferase (272 aa).

Mg(2+) is bound by residues D43 and D82. 3-methyl-2-oxobutanoate is bound by residues 43–44 (DS), D82, and K112. E114 contributes to the Mg(2+) binding site. E179 functions as the Proton acceptor in the catalytic mechanism.

The protein belongs to the PanB family. Homodecamer; pentamer of dimers. Mg(2+) serves as cofactor.

It localises to the cytoplasm. It carries out the reaction 3-methyl-2-oxobutanoate + (6R)-5,10-methylene-5,6,7,8-tetrahydrofolate + H2O = 2-dehydropantoate + (6S)-5,6,7,8-tetrahydrofolate. It functions in the pathway cofactor biosynthesis; (R)-pantothenate biosynthesis; (R)-pantoate from 3-methyl-2-oxobutanoate: step 1/2. Catalyzes the reversible reaction in which hydroxymethyl group from 5,10-methylenetetrahydrofolate is transferred onto alpha-ketoisovalerate to form ketopantoate. The polypeptide is 3-methyl-2-oxobutanoate hydroxymethyltransferase (Staphylococcus aureus (strain JH1)).